The chain runs to 177 residues: Inorganic pyrophosphatase (177 aa).

3 residues coordinate substrate: K31, R45, and Y57. Residues D67, D72, and D104 each contribute to the Mg(2+) site. Residue Y141 participates in substrate binding.

This sequence belongs to the PPase family. As to quaternary structure, homohexamer. Also forms homotrimers, but the trimeric form is 23% less active than the hexamer. In fact, likely forms a dimer of trimers. Mg(2+) is required as a cofactor.

The protein localises to the cytoplasm. The catalysed reaction is diphosphate + H2O = 2 phosphate + H(+). With respect to regulation, inhibited by sodium fluoride (NaF) in vitro, similarly to other class A type inorganic pyrophosphatases. Catalyzes the hydrolysis of inorganic pyrophosphate (PPi) forming two phosphate ions. The hydrolysis of PPi by inorganic pyrophosphatase releases a considerable amount of energy that can drive unfavorable biochemical transformations to completion. Is not active on nucleoside triphosphates (ATP, TTP, GTP, or CTP) or nucleoside diphosphate (ADP). The polypeptide is Inorganic pyrophosphatase (Haloferax volcanii (strain ATCC 29605 / DSM 3757 / JCM 8879 / NBRC 14742 / NCIMB 2012 / VKM B-1768 / DS2) (Halobacterium volcanii)).